Consider the following 511-residue polypeptide: MSRGPEEVNRLTESTYRNVMEQFNPGLRNLINLGKNYEKAVNAMILAGKAYYDGVAKIGEIATGSPVSTELGHVLIEISSTHKKLNESLDENFKKFHKEIIHELEKKIELDVKYMNATLKRYQTEHKNKLESLEKSQAELKKIRRKSQGSRNALKYEHKEIEYVETVTSRQSEIQKFIADGCKEALLEEKRRFCFLVDKHCGFANHIHYYHLQSAELLNSKLPRWQETCVDAIKVPEKIMNMIEEIKTPASTPVSGTPQASPMIERSNVVRKDYDTLSKCSPKMPPAPSGRAYTSPLIDMFNNPATAAPNSQRVNNSTGTSEDPSLQRSVSVATGLNMMKKQKVKTIFPHTAGSNKTLLSFAQGDVITLLIPEEKDGWLYGEHDVSKARGWFPSSYTKLLEENETEAVTVPTPSPTPVRSISTVNLSENSSVVIPPPDYLECLSMGAAADRRADSARTTSTFKAPASKPETAAPNDANGTAKPPFLSGENPFATVKLRPTVTNDRSAPIIR.

The IMD domain occupies Met-1–Pro-249. Residues Met-115–Leu-154 are a coiled coil. 2 positions are modified to phosphothreonine: Thr-248 and Thr-257. 2 positions are modified to phosphoserine: Ser-261 and Ser-281. A disordered region spans residues Asn-302–Arg-328. Over residues Asn-303–Arg-328 the composition is skewed to polar residues. Residues Ser-331 and Ser-354 each carry the phosphoserine modification. The region spanning Met-339–Glu-402 is the SH3 domain. Thr-412 carries the post-translational modification Phosphothreonine. Ser-414, Ser-420, and Ser-422 each carry phosphoserine. The tract at residues Arg-451–Arg-511 is disordered. Residues Pro-483–Arg-511 are binds F-actin.

In terms of assembly, interacts with RAC1. Binds to F-actin. Interacts with FASLG. Interacts (via SH3 domain) with E.coli effector protein EspF(U) (via PXXP motifs). Identified in a complex containing at least WASL, BAIAP2L1 and E.coli EspF(U). Interacts with E.coli intimin receptor Tir. Phosphorylated on tyrosine in response to insulin.

It is found in the cytoplasm. Its subcellular location is the cytoskeleton. May function as adapter protein. Involved in the formation of clusters of actin bundles. Plays a role in the reorganization of the actin cytoskeleton in response to bacterial infection. The chain is BAR/IMD domain-containing adapter protein 2-like 1 (BAIAP2L1) from Homo sapiens (Human).